Here is a 711-residue protein sequence, read N- to C-terminus: DNA ligase (711 aa).

A disordered region spans residues 1 to 29; sequence MSEDAIGQQVPAAQEAAAGAEPNSAARER. Positions 12–25 are enriched in low complexity; that stretch reads AAQEAAAGAEPNSA. NAD(+) is bound by residues 54–58, 103–104, and Glu-133; these read DAAFD and SL. The N6-AMP-lysine intermediate role is filled by Lys-135. Residues Arg-156, Glu-197, Lys-313, and Lys-337 each contribute to the NAD(+) site. The Zn(2+) site is built by Cys-431, Cys-434, Cys-450, and Cys-456. The BRCT domain occupies 620 to 709; that stretch reads QGPRPLEGVT…PEAARAVARV (90 aa).

It belongs to the NAD-dependent DNA ligase family. LigA subfamily. Mg(2+) is required as a cofactor. Requires Mn(2+) as cofactor.

It catalyses the reaction NAD(+) + (deoxyribonucleotide)n-3'-hydroxyl + 5'-phospho-(deoxyribonucleotide)m = (deoxyribonucleotide)n+m + AMP + beta-nicotinamide D-nucleotide.. In terms of biological role, DNA ligase that catalyzes the formation of phosphodiester linkages between 5'-phosphoryl and 3'-hydroxyl groups in double-stranded DNA using NAD as a coenzyme and as the energy source for the reaction. It is essential for DNA replication and repair of damaged DNA. In Salinispora tropica (strain ATCC BAA-916 / DSM 44818 / JCM 13857 / NBRC 105044 / CNB-440), this protein is DNA ligase.